A 406-amino-acid polypeptide reads, in one-letter code: uncharacterized protein (406 aa).

This sequence to S.pombe SpAC12C2.04.

It localises to the cytoplasm. The protein resides in the nucleus. This is an uncharacterized protein from Schizosaccharomyces pombe (strain 972 / ATCC 24843) (Fission yeast).